The primary structure comprises 92 residues: Small ribosomal subunit protein uS19c (92 aa).

The protein belongs to the universal ribosomal protein uS19 family.

The protein localises to the plastid. It is found in the chloroplast. Protein S19 forms a complex with S13 that binds strongly to the 16S ribosomal RNA. This chain is Small ribosomal subunit protein uS19c, found in Huperzia lucidula (Shining clubmoss).